We begin with the raw amino-acid sequence, 359 residues long: Trans-enoyl reductase FSL5 (359 aa).

47–50 (IDGK) lines the NADP(+) pocket. 134 to 141 (SGVGTIGL) is a binding site for substrate. NADP(+) is bound by residues 169–172 (STAT), 192–195 (SPHN), Tyr210, and 257–258 (LE). Position 277–281 (277–281 (GPTLL)) interacts with substrate. 346 to 347 (VS) contacts NADP(+).

It belongs to the zinc-containing alcohol dehydrogenase family. As to quaternary structure, monomer.

Its pathway is secondary metabolite biosynthesis. In terms of biological role, trans-enoyl reductase; part of the gene cluster that mediates the biosynthesis of fusarielins F, G and H, decaketide compounds with 5 methylations and a decaline core that act as mycoestrogens as they stimulate growth of MCF-7 breast cancer cells. The initial compound in the pathway is produced by the reducing polyketide synthase FSL1. FSL1 lacks an active enoyl reductase (ER) domain and biosynthesis of fusarielins relies on the trans-acting enoyl reductase FSL5, before it is released through hydrolysis catalyzed by the thioesterase FSL2. Fusarielins F, G, and H have a C11=C12 cis double bond and is fully reduced between C10 and C11 and between C12 and C13. FSL3 can be involved in the formation of the C11=C12 cis double bond by moving a hypothetical C10=C11 or C12=C13 trans double bond to form prefusarielin. Prefusarielin is oxygenated at C15 and C16 by the cytochrome P450 monooxygenase FSL4, resulting in fusarielin F, which subsequently is epoxidized into fusarielin G by the same enzyme. The final step in the pathway is a reduction of the carboxylic acid moiety to yield fusarielin H via a still undetermined mechanism. The chain is Trans-enoyl reductase FSL5 from Gibberella zeae (strain ATCC MYA-4620 / CBS 123657 / FGSC 9075 / NRRL 31084 / PH-1) (Wheat head blight fungus).